The following is a 262-amino-acid chain: Acyl-[acyl-carrier-protein]--UDP-N-acetylglucosamine O-acyltransferase (262 aa).

The protein belongs to the transferase hexapeptide repeat family. LpxA subfamily. As to quaternary structure, homotrimer.

It is found in the cytoplasm. It catalyses the reaction a (3R)-hydroxyacyl-[ACP] + UDP-N-acetyl-alpha-D-glucosamine = a UDP-3-O-[(3R)-3-hydroxyacyl]-N-acetyl-alpha-D-glucosamine + holo-[ACP]. Its pathway is glycolipid biosynthesis; lipid IV(A) biosynthesis; lipid IV(A) from (3R)-3-hydroxytetradecanoyl-[acyl-carrier-protein] and UDP-N-acetyl-alpha-D-glucosamine: step 1/6. Involved in the biosynthesis of lipid A, a phosphorylated glycolipid that anchors the lipopolysaccharide to the outer membrane of the cell. The chain is Acyl-[acyl-carrier-protein]--UDP-N-acetylglucosamine O-acyltransferase from Erwinia tasmaniensis (strain DSM 17950 / CFBP 7177 / CIP 109463 / NCPPB 4357 / Et1/99).